The chain runs to 89 residues: MSMPYDNEAKIKQAVILLQKIVNDTSVPRNIRRAATDAIRNLQDLGLSPAVRAANAIGILEDISQDPNMPTHARISIWNVVSILETVKD.

The protein belongs to the UPF0147 family.

The polypeptide is UPF0147 protein YN1551_1489 (Saccharolobus islandicus (strain Y.N.15.51 / Yellowstone #2) (Sulfolobus islandicus)).